The sequence spans 107 residues: Large ribosomal subunit protein uL24 (107 aa).

It belongs to the universal ribosomal protein uL24 family. As to quaternary structure, part of the 50S ribosomal subunit.

One of two assembly initiator proteins, it binds directly to the 5'-end of the 23S rRNA, where it nucleates assembly of the 50S subunit. Functionally, one of the proteins that surrounds the polypeptide exit tunnel on the outside of the subunit. In Thermotoga neapolitana (strain ATCC 49049 / DSM 4359 / NBRC 107923 / NS-E), this protein is Large ribosomal subunit protein uL24.